The following is a 298-amino-acid chain: Probable endonuclease 4 (298 aa).

Zn(2+)-binding residues include histidine 69, histidine 110, glutamate 145, aspartate 179, histidine 182, histidine 214, aspartate 227, histidine 229, and glutamate 259.

Belongs to the AP endonuclease 2 family. Requires Zn(2+) as cofactor.

The catalysed reaction is Endonucleolytic cleavage to 5'-phosphooligonucleotide end-products.. In terms of biological role, endonuclease IV plays a role in DNA repair. It cleaves phosphodiester bonds at apurinic or apyrimidinic (AP) sites, generating a 3'-hydroxyl group and a 5'-terminal sugar phosphate. The sequence is that of Probable endonuclease 4 from Geobacillus sp. (strain WCH70).